The chain runs to 436 residues: MAVNLSRNGPALQEAYVRVVTEKSPTDWALFTYEGNSNDIRVAGTGEGGLEELVEELNSGKVMYAFCRVKDPNSGLPKFVLINWTGEGVNDVRKGACANHVSTMANFLKGAHVTINARAEEDVEPECIMEKVAKASGANYSFHKESTSFQDVGPQAPVGSVYQKTNAISEIKRVGKDNFWAKAEKEEENRRLEEKRRAEEERQRLEEERRERELQEAARREQRYQEQHRSAGAPSPSSRTGEPEQEAVSRTRQEWESAGQQAPHPREIFKQKERAMSTTSVTSSQPGKLRSPFLQKQLTQPETSYGREPTAPVSRPAAGVCEEPAPSTLSSAQTEEEPTYEVPPEQDTLYEEPPLVQQQGAGSEHIDNYMQSQGFSGQGLCARALYDYQAADDTEISFDPENLITGIEVIDEGWWRGYGPDGHFGMFPANYVELIE.

An ADF-H domain is found at 2–133 (AVNLSRNGPA…EPECIMEKVA (132 aa)). Threonine 26 carries the post-translational modification Phosphothreonine. Serine 160 bears the Phosphoserine mark. Lysine 176 carries the post-translational modification N6-acetyllysine. The stretch at 179 to 233 (FWAKAEKEEENRRLEEKRRAEEERQRLEEERRERELQEAARREQRYQEQHRSAGA) forms a coiled coil. Composition is skewed to basic and acidic residues over residues 185–229 (KEEE…EQHR) and 264–275 (HPREIFKQKERA). Residues 185-341 (KEEENRRLEE…AQTEEEPTYE (157 aa)) form a disordered region. Polar residues predominate over residues 276-286 (MSTTSVTSSQP). A phosphoserine mark is found at serine 277, serine 280, serine 283, and serine 291. The span at 294-303 (LQKQLTQPET) shows a compositional bias: polar residues. N6-acetyllysine is present on lysine 296. Threonine 299 carries the post-translational modification Phosphothreonine. Tyrosine 340 and tyrosine 350 each carry phosphotyrosine. Residues 377–436 (GQGLCARALYDYQAADDTEISFDPENLITGIEVIDEGWWRGYGPDGHFGMFPANYVELIE) form the SH3 domain.

This sequence belongs to the ABP1 family. In terms of assembly, interacts with SHANK3, SYN1 and PRAM1. Interacts with SHANK2. Interacts with FGD1, DNM1 and MAP4K1. Interacts with ANKRD54. Interacts with COBL. Interacts with WASL and WIPF1. As to expression, detected in hippocampus neurons and in the Purkinje cell layer in cerebellum (at protein level). Predominantly expressed in brain, thymus and spleen. Also found in testis, heart and lung. Little or no expression detected in ovary or muscle.

Its subcellular location is the cytoplasm. It is found in the cytoskeleton. The protein resides in the cell projection. The protein localises to the lamellipodium. It localises to the ruffle. Its subcellular location is the cell cortex. It is found in the cytosol. The protein resides in the synapse. The protein localises to the perikaryon. It localises to the neuron projection. Its subcellular location is the cell membrane. It is found in the cytoplasmic vesicle. The protein resides in the clathrin-coated vesicle membrane. The protein localises to the golgi apparatus membrane. It localises to the podosome. Its subcellular location is the early endosome. It is found in the dendrite. The protein resides in the postsynaptic density. Its function is as follows. Adapter protein that binds F-actin and DNM1, and thereby plays a role in receptor-mediated endocytosis. Plays a role in the reorganization of the actin cytoskeleton, formation of cell projections, such as neurites, in neuron morphogenesis and synapse formation via its interaction with WASL and COBL. Does not bind G-actin and promote actin polymerization by itself. Required for the formation of organized podosome rosettes. May act as a common effector of antigen receptor-signaling pathways in leukocytes. Acts as a key component of the immunological synapse that regulates T-cell activation by bridging TCRs and the actin cytoskeleton to gene activation and endocytic processes. This chain is Drebrin-like protein, found in Mus musculus (Mouse).